A 233-amino-acid polypeptide reads, in one-letter code: Zinc metalloproteinase recombinant fibrinogenase II (233 aa).

Positions 19 to 215 (KYVETVFVVD…HNPECIDNEP (197 aa)) constitute a Peptidase M12B domain. Residues E22 and D106 each coordinate Ca(2+). Cystine bridges form between C130/C210, C170/C194, and C172/C177. H155 is a Zn(2+) binding site. E156 is an active-site residue. Zn(2+)-binding residues include H159 and H165. A glycan (N-linked (GlcNAc...) asparagine) is linked at N193. Ca(2+) is bound by residues C210, N213, N228, L230, and E232.

Belongs to the venom metalloproteinase (M12B) family. P-III subfamily. Requires Zn(2+) as cofactor. As to expression, expressed by the venom gland.

Its subcellular location is the secreted. Its activity is regulated as follows. Inhibited by PMSF and EDTA. Slightly inhibited by Cu(2+) and Zn(2+). Not inhibited by aprotinin, SBTI, Ca(2+), Mg(2+), Na(+) and K(+). Its function is as follows. Snake venom zinc metalloprotease that acts at several levels. It has direct fibrino(geno)lytic activity (Aalpha chain of fibrinogen is cleaved quickly, Bbeta chain slowly, and gamma chain even more slowly) and degradation of TNF-alpha. These activities permit to protect against sepsis and disseminated intravascular coagulation. It inhibits ADP-induced platelet aggregation in human platelet-rich plasma (IC(50)=65.4 ug/ml). It decreases the activity of complement by degrading human C5, C6 and C9 in vitro, decreasing serum levels of C1q, C3 and C4 in rat, and inhibiting the MAC deposition on HUVECs membrane. This inhibition of complement protects against hyperacute rejection that is the main barrier in xenotransplantation. Has preference for Lys at the P1 position. Cleaves insulin B chain at '36-Val-|-Glu-37', '39-Leu-|-Tyr-40', and '48-Phe-|-Phe-49' bonds. Also cleaves fibronectin and type IV collagen. This Deinagkistrodon acutus (Hundred-pace snake) protein is Zinc metalloproteinase recombinant fibrinogenase II.